The chain runs to 141 residues: Small ribosomal subunit protein bS16 (141 aa).

The segment at threonine 84–alanine 141 is disordered. Over residues serine 89–glutamate 111 the composition is skewed to basic and acidic residues. Residues alanine 115–alanine 141 show a composition bias toward low complexity.

The protein belongs to the bacterial ribosomal protein bS16 family.

This chain is Small ribosomal subunit protein bS16, found in Parvibaculum lavamentivorans (strain DS-1 / DSM 13023 / NCIMB 13966).